The following is a 384-amino-acid chain: DNA dC-&gt;dU-editing enzyme APOBEC-3G (384 aa).

The segment at M1–F60 is essential for cytoplasmic localization. CMP/dCMP-type deaminase domains lie at R29 to L138 and G214 to L328. T32 carries the post-translational modification Phosphothreonine; by PKA. Zn(2+) contacts are provided by H65, C97, and C100. The necessary for homooligomerization stretch occupies residues E209–S336. An interaction with DNA region spans residues E213–R215. The residue at position 218 (T218) is a Phosphothreonine; by PKA and CAMK2. H257 lines the Zn(2+) pocket. The Proton donor role is filled by E259. Zn(2+)-binding residues include C288 and C291. Residues R313–R320 form an interaction with DNA region.

It belongs to the cytidine and deoxycytidylate deaminase family. In terms of assembly, homodimer. It depends on Zn(2+) as a cofactor.

The protein localises to the cytoplasm. It localises to the nucleus. The protein resides in the P-body. The enzyme catalyses a 2'-deoxycytidine in single-stranded DNA + H2O + H(+) = a 2'-deoxyuridine in single-stranded DNA + NH4(+). Its function is as follows. DNA deaminase (cytidine deaminase) which acts as an inhibitor of retrovirus replication and retrotransposon mobility. After the penetration of retroviral nucleocapsids into target cells of infection and the initiation of reverse transcription, it can induce the conversion of cytosine to uracil in the minus-sense single-strand viral DNA, leading to G-to-A hypermutations in the subsequent plus-strand viral DNA. The resultant detrimental levels of mutations in the proviral genome, along with a deamination-independent mechanism that works prior to the proviral integration, together exert efficient antiretroviral effects in infected target cells. Selectively targets single-stranded DNA and does not deaminate double-stranded DNA or single- or double-stranded RNA. This chain is DNA dC-&gt;dU-editing enzyme APOBEC-3G (APOBEC3G), found in Pongo pygmaeus (Bornean orangutan).